The following is a 466-amino-acid chain: Adenosylhomocysteinase (466 aa).

Residues threonine 57, aspartate 132, and glutamate 192 each coordinate substrate. NAD(+) is bound at residue 193-195 (TTT). Lysine 222 and aspartate 226 together coordinate substrate. NAD(+)-binding positions include asparagine 227, 256-261 (GYGDVG), glutamate 279, asparagine 314, 335-337 (IGH), and asparagine 380.

This sequence belongs to the adenosylhomocysteinase family. The cofactor is NAD(+).

The protein resides in the cytoplasm. It carries out the reaction S-adenosyl-L-homocysteine + H2O = L-homocysteine + adenosine. It functions in the pathway amino-acid biosynthesis; L-homocysteine biosynthesis; L-homocysteine from S-adenosyl-L-homocysteine: step 1/1. Its function is as follows. May play a key role in the regulation of the intracellular concentration of adenosylhomocysteine. This is Adenosylhomocysteinase from Brucella abortus (strain S19).